A 634-amino-acid chain; its full sequence is DNA-directed RNA polymerase subunit gamma (634 aa).

4 residues coordinate Zn(2+): Cys-74, Cys-76, Cys-89, and Cys-92. Asp-471, Asp-473, and Asp-475 together coordinate Mg(2+).

It belongs to the RNA polymerase beta' chain family. RpoC1 subfamily. In cyanobacteria the RNAP catalytic core is composed of 2 alpha, 1 beta, 1 beta', 1 gamma and 1 omega subunit. When a sigma factor is associated with the core the holoenzyme is formed, which can initiate transcription. Mg(2+) is required as a cofactor. It depends on Zn(2+) as a cofactor.

It catalyses the reaction RNA(n) + a ribonucleoside 5'-triphosphate = RNA(n+1) + diphosphate. In terms of biological role, DNA-dependent RNA polymerase catalyzes the transcription of DNA into RNA using the four ribonucleoside triphosphates as substrates. In Prochlorococcus marinus (strain AS9601), this protein is DNA-directed RNA polymerase subunit gamma.